A 1354-amino-acid chain; its full sequence is Rho-associated protein kinase 1 (1354 aa).

Serine 2 is subject to N-acetylserine. The Protein kinase domain occupies 76 to 338 (YEVVKVIGRG…VEEIKRHLFF (263 aa)). ATP is bound by residues 82 to 90 (IGRGAFGEV) and lysine 105. Aspartate 198 (proton acceptor) is an active-site residue. The 69-residue stretch at 341 to 409 (DQWAWETLRD…YSNRRYLSSA (69 aa)) folds into the AGC-kinase C-terminal domain. An interaction with FHOD1 region spans residues 368–727 (FDDLEEDKGE…KKLKEEREAR (360 aa)). Residues 422–692 (KSLQESLQKT…RLEQEVNEHK (271 aa)) adopt a coiled-coil conformation. An REM-1 domain is found at 479-556 (STVSQIEKEK…LEEANDLLRT (78 aa)). Lysine 647 carries the post-translational modification N6-acetyllysine. The segment at 707-946 (EAKSVAMCEM…TVSRLEEANS (240 aa)) is SHROOM3 binding. Positions 949 to 1015 (TKDIEILRRE…LAEIMNRKDF (67 aa)) constitute a RhoBD domain. The interval 998-1010 (LKTQAVNKLAEIM) is RHOA binding. Residues 1011–1102 (NRKDFKIDRK…KLLDLSDSTS (92 aa)) are a coiled coil. Phosphoserine is present on residues serine 1105 and serine 1108. An auto-inhibitory region spans residues 1115–1354 (NLPESRIEGW…VVKNTSGKTS (240 aa)). A PH domain is found at 1118–1317 (ESRIEGWLSV…WVTHLVKKIP (200 aa)). A Phorbol-ester/DAG-type zinc finger spans residues 1228–1281 (GHEFIPTLYHFPANCDACAKPLWHVFKPPPALECRRCHVKCHRDHLDKKEDLIC). The interval 1320–1354 (PPSGFVRASPRTLSTRSTANQSFRKVVKNTSGKTS) is disordered. A Phosphoserine modification is found at serine 1328. The segment covering 1330–1354 (RTLSTRSTANQSFRKVVKNTSGKTS) has biased composition (polar residues).

The protein belongs to the protein kinase superfamily. AGC Ser/Thr protein kinase family. Homodimer. Interacts with RHOB, RHOC, MYLC2B and PTEN. Interacts with ITGB1BP1 (via N-terminus and PTB domain). Interacts with RHOA (activated by GTP), CHORDC1, DAPK3, GEM, JIP3, RHOE, PPP1R12A, PFN1, LIMK1, LIMK2 and TSG101. Interacts with FHOD1 in a Src-dependent manner. Interacts with SHROOM3. The cofactor is Mg(2+). In terms of processing, autophosphorylated on serine and threonine residues. Post-translationally, cleaved by caspase-3 during apoptosis. This leads to constitutive activation of the kinase and membrane blebbing. As to expression, detected in blood platelets.

The protein resides in the cytoplasm. The protein localises to the cytoskeleton. Its subcellular location is the microtubule organizing center. It is found in the centrosome. It localises to the centriole. The protein resides in the golgi apparatus membrane. The protein localises to the cell projection. Its subcellular location is the bleb. It is found in the cell membrane. It localises to the lamellipodium. The protein resides in the ruffle. The enzyme catalyses L-seryl-[protein] + ATP = O-phospho-L-seryl-[protein] + ADP + H(+). It carries out the reaction L-threonyl-[protein] + ATP = O-phospho-L-threonyl-[protein] + ADP + H(+). With respect to regulation, activated by RHOA binding. Inhibited by Y-27632. In terms of biological role, protein kinase which is a key regulator of the actin cytoskeleton and cell polarity. Involved in regulation of smooth muscle contraction, actin cytoskeleton organization, stress fiber and focal adhesion formation, neurite retraction, cell adhesion and motility via phosphorylation of DAPK3, GFAP, LIMK1, LIMK2, MYL9/MLC2, TPPP, PFN1 and PPP1R12A. Phosphorylates FHOD1 and acts synergistically with it to promote SRC-dependent non-apoptotic plasma membrane blebbing. Phosphorylates JIP3 and regulates the recruitment of JNK to JIP3 upon UVB-induced stress. Acts as a suppressor of inflammatory cell migration by regulating PTEN phosphorylation and stability. Acts as a negative regulator of VEGF-induced angiogenic endothelial cell activation. Required for centrosome positioning and centrosome-dependent exit from mitosis. Plays a role in terminal erythroid differentiation. Inhibits podocyte motility via regulation of actin cytoskeletal dynamics and phosphorylation of CFL1. Promotes keratinocyte terminal differentiation. Involved in osteoblast compaction through the fibronectin fibrillogenesis cell-mediated matrix assembly process, essential for osteoblast mineralization. May regulate closure of the eyelids and ventral body wall by inducing the assembly of actomyosin bundles. This Homo sapiens (Human) protein is Rho-associated protein kinase 1 (ROCK1).